A 419-amino-acid polypeptide reads, in one-letter code: Argininosuccinate synthase (419 aa).

9 to 17 (AYSGGLDTS) contributes to the ATP binding site. Residue Tyr-87 participates in L-citrulline binding. Position 117 (Gly-117) interacts with ATP. Residues Thr-119, Asn-123, and Asp-124 each contribute to the L-aspartate site. Asn-123 contacts L-citrulline. 5 residues coordinate L-citrulline: Arg-127, Ser-175, Ser-184, Glu-260, and Tyr-272.

It belongs to the argininosuccinate synthase family. Type 1 subfamily. Homotetramer.

The protein resides in the cytoplasm. The enzyme catalyses L-citrulline + L-aspartate + ATP = 2-(N(omega)-L-arginino)succinate + AMP + diphosphate + H(+). It functions in the pathway amino-acid biosynthesis; L-arginine biosynthesis; L-arginine from L-ornithine and carbamoyl phosphate: step 2/3. This chain is Argininosuccinate synthase, found in Brevibacillus brevis (strain 47 / JCM 6285 / NBRC 100599).